The chain runs to 30 residues: Cycloviolacin-O5 (30 aa).

Residues G1–N30 constitute a cross-link (cyclopeptide (Gly-Asn)). Cystine bridges form between C4/C20, C8/C22, and C13/C27.

This is a cyclic peptide.

In terms of biological role, probably participates in a plant defense mechanism. This is Cycloviolacin-O5 from Viola odorata (Sweet violet).